A 132-amino-acid chain; its full sequence is Riboflavin kinase (132 aa).

13 to 18 contacts CDP; it reads GLGHGS. Threonine 40 and asparagine 42 together coordinate Mg(2+). 2 residues coordinate FMN: threonine 98 and glutamate 106. 111–114 serves as a coordination point for CDP; that stretch reads VYLR.

This sequence belongs to the archaeal riboflavin kinase family. Mg(2+) is required as a cofactor.

The enzyme catalyses riboflavin + CTP = CDP + FMN + H(+). It functions in the pathway cofactor biosynthesis; FMN biosynthesis; FMN from riboflavin (CTP route): step 1/1. Its function is as follows. Catalyzes the CTP-dependent phosphorylation of riboflavin (vitamin B2) to form flavin mononucleotide (FMN). This is Riboflavin kinase from Aeropyrum pernix (strain ATCC 700893 / DSM 11879 / JCM 9820 / NBRC 100138 / K1).